Reading from the N-terminus, the 527-residue chain is FAD-dependent monooxygenase CTB5 (527 aa).

In terms of domain architecture, FAD-binding PCMH-type spans 78-255 (SDLHPSCIAL…TAVTLKTFGQ (178 aa)).

It belongs to the oxygen-dependent FAD-linked oxidoreductase family.

Its pathway is mycotoxin biosynthesis. FAD-dependent monooxygenase; part of the gene cluster that mediates the biosynthesis of cercosporin, a light-activated, non-host-selective toxin. The perylenequinone chromophore of cercosporin absorbs light energy to attain an electronically-activated triplet state and produces active oxygen species such as the hydroxyl radical, superoxide, hydrogen peroxide or singlet oxygen upon reaction with oxygen molecules. These reactive oxygen species cause damage to various cellular components including lipids, proteins and nucleic acids. The first step of cercosporin biosynthesis is performed by the polyketide synthase CTB1 which catalyzes the formation of nor-toralactone. The starter unit acyltransferase (SAT) domain of CTB1 initiates polyketide extension by the selective utilization of acetyl-CoA, which is elongated to the heptaketide in the beta-ketoacyl synthase (KS) domain by successive condensations with six malonyl units introduced by the malonyl acyltransferase (MAT) domain. The product template (PT) domain catalyzes C4-C9 and C2-C11 aldol cyclizations and dehydrations to a trihydroxynaphthalene, which is thought to be delivered to the thioesterase (TE) domain for product release. The bifunctional enzyme CTB3 then methylates nor-toralactone to toralactone before conducting an unusual oxidative aromatic ring opening. The O-methyltransferase CTB2 further methylates the nascent OH-6 of the CBT3 product, blocking further oxidation at this site before the reductase CTB6 reduces the 2-oxopropyl ketone at position C7, giving naphthalene. The FAD-dependent monooxygenase CTB5 in concert with the multicopper oxidase CTB12 are responsible for homodimerization of naphthalene with CTB7 installing the dioxepine moiety, finally producing cercosporin. The fasciclin domain-containing protein CTB11 might act with CTB5 and CTB12 whereas the roles of CTB9 and CTB10 have still to be elucidated. The protein is FAD-dependent monooxygenase CTB5 of Cercospora beticola (Sugarbeet leaf spot fungus).